The primary structure comprises 168 residues: Photosystem I assembly protein Ycf3 (168 aa).

TPR repeat units follow at residues 35-68 (AFTY…EIDP), 72-105 (SYIL…NPSL), and 120-153 (GEQA…APSN).

This sequence belongs to the Ycf3 family.

It is found in the plastid. The protein resides in the chloroplast thylakoid membrane. Essential for the assembly of the photosystem I (PSI) complex. May act as a chaperone-like factor to guide the assembly of the PSI subunits. The sequence is that of Photosystem I assembly protein Ycf3 from Physcomitrium patens (Spreading-leaved earth moss).